The sequence spans 129 residues: Small ribosomal subunit protein uS12 (129 aa).

Position 89 is a 3-methylthioaspartic acid (aspartate 89).

It belongs to the universal ribosomal protein uS12 family. Part of the 30S ribosomal subunit. Contacts proteins S8 and S17. May interact with IF1 in the 30S initiation complex.

With S4 and S5 plays an important role in translational accuracy. Its function is as follows. Interacts with and stabilizes bases of the 16S rRNA that are involved in tRNA selection in the A site and with the mRNA backbone. Located at the interface of the 30S and 50S subunits, it traverses the body of the 30S subunit contacting proteins on the other side and probably holding the rRNA structure together. The combined cluster of proteins S8, S12 and S17 appears to hold together the shoulder and platform of the 30S subunit. The polypeptide is Small ribosomal subunit protein uS12 (Rickettsia akari (strain Hartford)).